The sequence spans 524 residues: Glutamyl-tRNA(Gln) amidotransferase subunit A (524 aa).

Catalysis depends on charge relay system residues K109 and S184. The active-site Acyl-ester intermediate is S208.

It belongs to the amidase family. GatA subfamily. Heterotrimer of A, B and C subunits.

The enzyme catalyses L-glutamyl-tRNA(Gln) + L-glutamine + ATP + H2O = L-glutaminyl-tRNA(Gln) + L-glutamate + ADP + phosphate + H(+). Functionally, allows the formation of correctly charged Gln-tRNA(Gln) through the transamidation of misacylated Glu-tRNA(Gln) in organisms which lack glutaminyl-tRNA synthetase. The reaction takes place in the presence of glutamine and ATP through an activated gamma-phospho-Glu-tRNA(Gln). This Tropheryma whipplei (strain Twist) (Whipple's bacillus) protein is Glutamyl-tRNA(Gln) amidotransferase subunit A.